The primary structure comprises 478 residues: Hemolysin secretion protein D, plasmid (478 aa).

At 1–59 (MKTWLMGFSEFLLRYKLVWSETWKIRKQLDTPVREKDENEFLPAHLELIETPVSRRPRL) the chain is on the cytoplasmic side. Residues 60 to 80 (VAYFIMGFLVIAFILSVLGQV) form a helical; Signal-anchor for type II membrane protein membrane-spanning segment. Residues 81-478 (EIVATANGKL…ESVTESLRER (398 aa)) lie on the Periplasmic side of the membrane.

This sequence belongs to the membrane fusion protein (MFP) (TC 8.A.1) family.

The protein resides in the cell inner membrane. Involved in the transport of hemolysin A. This Escherichia coli protein is Hemolysin secretion protein D, plasmid (hlyD).